Consider the following 620-residue polypeptide: Dihydroxy-acid dehydratase (620 aa).

Aspartate 81 lines the Mg(2+) pocket. Position 122 (cysteine 122) interacts with [2Fe-2S] cluster. Mg(2+)-binding residues include aspartate 123 and lysine 124. Lysine 124 is subject to N6-carboxylysine. Cysteine 195 provides a ligand contact to [2Fe-2S] cluster. Residue glutamate 491 participates in Mg(2+) binding. Residue serine 517 is the Proton acceptor of the active site.

Belongs to the IlvD/Edd family. Homodimer. It depends on [2Fe-2S] cluster as a cofactor. Requires Mg(2+) as cofactor.

The catalysed reaction is (2R)-2,3-dihydroxy-3-methylbutanoate = 3-methyl-2-oxobutanoate + H2O. It carries out the reaction (2R,3R)-2,3-dihydroxy-3-methylpentanoate = (S)-3-methyl-2-oxopentanoate + H2O. The protein operates within amino-acid biosynthesis; L-isoleucine biosynthesis; L-isoleucine from 2-oxobutanoate: step 3/4. It participates in amino-acid biosynthesis; L-valine biosynthesis; L-valine from pyruvate: step 3/4. Its function is as follows. Functions in the biosynthesis of branched-chain amino acids. Catalyzes the dehydration of (2R,3R)-2,3-dihydroxy-3-methylpentanoate (2,3-dihydroxy-3-methylvalerate) into 2-oxo-3-methylpentanoate (2-oxo-3-methylvalerate) and of (2R)-2,3-dihydroxy-3-methylbutanoate (2,3-dihydroxyisovalerate) into 2-oxo-3-methylbutanoate (2-oxoisovalerate), the penultimate precursor to L-isoleucine and L-valine, respectively. This is Dihydroxy-acid dehydratase from Colwellia psychrerythraea (strain 34H / ATCC BAA-681) (Vibrio psychroerythus).